Reading from the N-terminus, the 225-residue chain is Alpha-tubulin N-acetyltransferase 1 (225 aa).

Residues 1–190 form the N-acetyltransferase domain; it reads MEFPFDVDAL…NNFVIFEGFF (190 aa). Lys-56 is modified (N6-acetyllysine; by autocatalysis). 124-137 contacts acetyl-CoA; it reads FYIHESLQRHGHGR. Lys-146 carries the N6-acetyllysine; by autocatalysis modification. Position 160-169 (160-169) interacts with acetyl-CoA; it reads SQKLLKFLNK. The interval 195 to 225 is disordered; sequence PPARKLPPKRAEGDIKPYSSSDRESGLPQGW. A compositionally biased stretch (basic and acidic residues) spans 203–219; it reads KRAEGDIKPYSSSDRES. N6-acetyllysine; by autocatalysis is present on Lys-210.

This sequence belongs to the acetyltransferase ATAT1 family. In terms of assembly, component of the BBSome complex. Interacts with AP2 alpha-adaptins, including AP2A2, but not with AP1 gamma-adaptin (AP1G1/AP1G2); this interaction is required for efficient alpha-tubulin acetylation, hence clathrin-coated pits are sites of microtubule acetylation. Post-translationally, autoacetylation strongly increases tubulin acetylation.

It localises to the cytoplasm. Its subcellular location is the membrane. It is found in the clathrin-coated pit. The protein localises to the cell junction. The protein resides in the focal adhesion. It localises to the cell projection. Its subcellular location is the axon. It is found in the cytoskeleton. The protein localises to the spindle. It carries out the reaction L-lysyl-[alpha-tubulin] + acetyl-CoA = N(6)-acetyl-L-lysyl-[alpha-tubulin] + CoA + H(+). Specifically acetylates 'Lys-40' in alpha-tubulin on the lumenal side of microtubules. Promotes microtubule destabilization and accelerates microtubule dynamics; this activity may be independent of acetylation activity. Acetylates alpha-tubulin with a slow enzymatic rate, due to a catalytic site that is not optimized for acetyl transfer. Enters the microtubule through each end and diffuses quickly throughout the lumen of microtubules. Acetylates only long/old microtubules because of its slow acetylation rate since it does not have time to act on dynamically unstable microtubules before the enzyme is released. Required for normal sperm flagellar function. Promotes directional cell locomotion and chemotaxis, through AP2A2-dependent acetylation of alpha-tubulin at clathrin-coated pits that are concentrated at the leading edge of migrating cells. May facilitate primary cilium assembly. This is Alpha-tubulin N-acetyltransferase 1 from Bos taurus (Bovine).